The following is a 497-amino-acid chain: Alkane hydroxylase MAH1 (497 aa).

A helical membrane pass occupies residues 3 to 23; the sequence is MLGFYVTFIFFLVCLFTYFFL. A heme-binding site is contributed by C444.

The protein belongs to the cytochrome P450 family. It depends on heme as a cofactor. As to expression, expressed in the expanding regions of the inflorescence stems, specifically to the epidermal pavement cells, petioles and siliques.

Its subcellular location is the endoplasmic reticulum membrane. Its function is as follows. Involved in the formation of secondary alcohols and ketones in stem cuticular wax. Catalyzes the hydroxylation of a methylene unit in the middle of alkane molecules to form secondary alcohols and possibly also a second hydroxylation leading to the corresponding ketones. This Arabidopsis thaliana (Mouse-ear cress) protein is Alkane hydroxylase MAH1.